Consider the following 229-residue polypeptide: Rab-like protein 2A (229 aa).

GTP-binding positions include 28 to 35 (GDSAVGKS), 76 to 80 (DTAGQ), and 133 to 136 (NKID). The segment at 200–229 (NLEQEEEDVPDQEQSGSIETPSEEVASPHS) is disordered.

Belongs to the small GTPase superfamily. Rab family. In terms of assembly, interacts with IFT27, IFT81, IFT172, ATP6V1E1, HK1, LDHC, MAPRE1 and HSPA2.

Functionally, plays an essential role in male fertility, sperm intra-flagellar transport, and tail assembly. Binds, in a GTP-regulated manner, to a specific set of effector proteins including key proteins involved in cilia development and function and delivers them into the growing sperm tail. This is Rab-like protein 2A (RABL2A) from Pongo abelii (Sumatran orangutan).